The chain runs to 485 residues: MTVSATADGPAGTKTATGRVVRVIGPVVDAEFPRDAMPDLFNALHVDVTLAGGEKTLTLEVAQHLGDNLVRAISMQPTDGLVRGVEVRDTGSPITVPVGDTVKGHVFNAIGECLNLEPGETLSPDDHWQIHRKAPAFADLEPKTEMLETGIKVIDLLAPYVKGGKIGLFGGAGVGKTVLIQEMITRVARNFGGTSVFAGVGERTREGNDLIAEMTESGVIDKTALVYGQMDEPPGTRLRVALSALTMAEYFRDVQKQEVLLFIDNIFRFTQAGSEVSTLLGRMPSAVGYQPTLADEMGELQERITSVRGQAITSLQAIYVPADDYTDPAPATTFAHLDATTNLERSISDKGIYPAVDPLASSSRILAPEFVGQEHFVVASEVKRILQRYKDLQDIIAILGIEELSEEDKLIVGRARRIERFLSQNTYAAEQFTGMKGSTVPIKETIEAFKKISEGEYDHFPEQAFFMCGGLDDLERKAKELMAEG.

170 to 177 (GGAGVGKT) provides a ligand contact to ATP.

It belongs to the ATPase alpha/beta chains family. As to quaternary structure, F-type ATPases have 2 components, CF(1) - the catalytic core - and CF(0) - the membrane proton channel. CF(1) has five subunits: alpha(3), beta(3), gamma(1), delta(1), epsilon(1). CF(0) has three main subunits: a(1), b(2) and c(9-12). The alpha and beta chains form an alternating ring which encloses part of the gamma chain. CF(1) is attached to CF(0) by a central stalk formed by the gamma and epsilon chains, while a peripheral stalk is formed by the delta and b chains.

The protein resides in the cell membrane. It carries out the reaction ATP + H2O + 4 H(+)(in) = ADP + phosphate + 5 H(+)(out). Functionally, produces ATP from ADP in the presence of a proton gradient across the membrane. The catalytic sites are hosted primarily by the beta subunits. This chain is ATP synthase subunit beta, found in Salinispora arenicola (strain CNS-205).